Here is a 498-residue protein sequence, read N- to C-terminus: UDP-N-acetylmuramoylalanine--D-glutamate ligase (498 aa).

119–125 contributes to the ATP binding site; that stretch reads GTNGKST.

The protein belongs to the MurCDEF family.

The protein resides in the cytoplasm. It carries out the reaction UDP-N-acetyl-alpha-D-muramoyl-L-alanine + D-glutamate + ATP = UDP-N-acetyl-alpha-D-muramoyl-L-alanyl-D-glutamate + ADP + phosphate + H(+). It functions in the pathway cell wall biogenesis; peptidoglycan biosynthesis. Its function is as follows. Cell wall formation. Catalyzes the addition of glutamate to the nucleotide precursor UDP-N-acetylmuramoyl-L-alanine (UMA). The sequence is that of UDP-N-acetylmuramoylalanine--D-glutamate ligase from Wolbachia sp. subsp. Brugia malayi (strain TRS).